A 548-amino-acid chain; its full sequence is Chaperonin GroEL (548 aa).

Residues 30 to 33, Lys-51, 87 to 91, Gly-415, 479 to 481, and Asp-495 each bind ATP; these read TLGP, DGTTT, and NAA.

It belongs to the chaperonin (HSP60) family. In terms of assembly, forms a cylinder of 14 subunits composed of two heptameric rings stacked back-to-back. Interacts with the co-chaperonin GroES.

It localises to the cytoplasm. It carries out the reaction ATP + H2O + a folded polypeptide = ADP + phosphate + an unfolded polypeptide.. Together with its co-chaperonin GroES, plays an essential role in assisting protein folding. The GroEL-GroES system forms a nano-cage that allows encapsulation of the non-native substrate proteins and provides a physical environment optimized to promote and accelerate protein folding. The protein is Chaperonin GroEL of Methylibium petroleiphilum (strain ATCC BAA-1232 / LMG 22953 / PM1).